Here is an 842-residue protein sequence, read N- to C-terminus: Translation initiation factor IF-2 (842 aa).

Positions 121–144 (TESTSVEKSESDDVTLEEESSKKV) are disordered. A tr-type G domain is found at 340–510 (PRAPVVTVMG…LLMAELLELK (171 aa)). The interval 349-356 (GHVDHGKT) is G1. Position 349-356 (349-356 (GHVDHGKT)) interacts with GTP. A G2 region spans residues 374 to 378 (GITQH). Residues 396–399 (DTPG) form a G3 region. GTP-binding positions include 396–400 (DTPGH) and 450–453 (NKID). The tract at residues 450-453 (NKID) is G4. The tract at residues 486–488 (SAK) is G5.

It belongs to the TRAFAC class translation factor GTPase superfamily. Classic translation factor GTPase family. IF-2 subfamily.

It localises to the cytoplasm. One of the essential components for the initiation of protein synthesis. Protects formylmethionyl-tRNA from spontaneous hydrolysis and promotes its binding to the 30S ribosomal subunits. Also involved in the hydrolysis of GTP during the formation of the 70S ribosomal complex. The chain is Translation initiation factor IF-2 from Ehrlichia chaffeensis (strain ATCC CRL-10679 / Arkansas).